The chain runs to 208 residues: Small ribosomal subunit protein uS4 (208 aa).

The region spanning 99–165 is the S4 RNA-binding domain; it reads RRLDNVVFQL…PRLKEILSSL (67 aa).

Belongs to the universal ribosomal protein uS4 family. In terms of assembly, part of the 30S ribosomal subunit. Contacts protein S5. The interaction surface between S4 and S5 is involved in control of translational fidelity.

Its function is as follows. One of the primary rRNA binding proteins, it binds directly to 16S rRNA where it nucleates assembly of the body of the 30S subunit. In terms of biological role, with S5 and S12 plays an important role in translational accuracy. In Desulfitobacterium hafniense (strain Y51), this protein is Small ribosomal subunit protein uS4.